Consider the following 552-residue polypeptide: Hydroxylamine reductase (552 aa).

Residues C5, C8, C20, and C27 each coordinate [2Fe-2S] cluster. The hybrid [4Fe-2O-2S] cluster site is built by H251, E275, C319, C407, C435, C460, E494, and K496. A Cysteine persulfide modification is found at C407.

Belongs to the HCP family. It depends on [2Fe-2S] cluster as a cofactor. Hybrid [4Fe-2O-2S] cluster serves as cofactor.

The protein resides in the cytoplasm. It catalyses the reaction A + NH4(+) + H2O = hydroxylamine + AH2 + H(+). Catalyzes the reduction of hydroxylamine to form NH(3) and H(2)O. In Shigella sonnei (strain Ss046), this protein is Hydroxylamine reductase.